Reading from the N-terminus, the 344-residue chain is Heat-inducible transcription repressor HrcA (344 aa).

The protein belongs to the HrcA family.

In terms of biological role, negative regulator of class I heat shock genes (grpE-dnaK-dnaJ and groELS operons). Prevents heat-shock induction of these operons. In Streptococcus pyogenes serotype M6 (strain ATCC BAA-946 / MGAS10394), this protein is Heat-inducible transcription repressor HrcA.